Consider the following 127-residue polypeptide: Ribosome-binding factor A (127 aa).

It belongs to the RbfA family. In terms of assembly, monomer. Binds 30S ribosomal subunits, but not 50S ribosomal subunits or 70S ribosomes.

It localises to the cytoplasm. One of several proteins that assist in the late maturation steps of the functional core of the 30S ribosomal subunit. Associates with free 30S ribosomal subunits (but not with 30S subunits that are part of 70S ribosomes or polysomes). Required for efficient processing of 16S rRNA. May interact with the 5'-terminal helix region of 16S rRNA. The chain is Ribosome-binding factor A from Chloroflexus aurantiacus (strain ATCC 29366 / DSM 635 / J-10-fl).